We begin with the raw amino-acid sequence, 133 residues long: Acyl-CoA thioester hydrolase YciA (133 aa).

The region spanning 8-123 is the HotDog ACOT-type domain; it reads PQGELVLRTL…LFIYVAVDPD (116 aa).

It belongs to the acyl coenzyme A hydrolase family.

In terms of biological role, catalyzes the hydrolysis of the thioester bond in palmitoyl-CoA and malonyl-CoA. The chain is Acyl-CoA thioester hydrolase YciA (yciA) from Salmonella typhi.